A 157-amino-acid chain; its full sequence is ATP synthase subunit b' (157 aa).

Residues 22 to 42 form a helical membrane-spanning segment; the sequence is ATLPIIAVQFLLLVAVLNSLF.

This sequence belongs to the ATPase B chain family. In terms of assembly, F-type ATPases have 2 components, F(1) - the catalytic core - and F(0) - the membrane proton channel. F(1) has five subunits: alpha(3), beta(3), gamma(1), delta(1), epsilon(1). F(0) has four main subunits: a(1), b(1), b'(1) and c(10-14). The alpha and beta chains form an alternating ring which encloses part of the gamma chain. F(1) is attached to F(0) by a central stalk formed by the gamma and epsilon chains, while a peripheral stalk is formed by the delta, b and b' chains.

It is found in the cellular thylakoid membrane. Functionally, f(1)F(0) ATP synthase produces ATP from ADP in the presence of a proton or sodium gradient. F-type ATPases consist of two structural domains, F(1) containing the extramembraneous catalytic core and F(0) containing the membrane proton channel, linked together by a central stalk and a peripheral stalk. During catalysis, ATP synthesis in the catalytic domain of F(1) is coupled via a rotary mechanism of the central stalk subunits to proton translocation. In terms of biological role, component of the F(0) channel, it forms part of the peripheral stalk, linking F(1) to F(0). The b'-subunit is a diverged and duplicated form of b found in plants and photosynthetic bacteria. The sequence is that of ATP synthase subunit b' from Synechococcus sp. (strain JA-3-3Ab) (Cyanobacteria bacterium Yellowstone A-Prime).